We begin with the raw amino-acid sequence, 862 residues long: Protein SEY1 (862 aa).

At 1–747 the chain is on the cytoplasmic side; sequence MVSNGHFASA…KRSAIGGMTQ (747 aa). Residues 49–306 enclose the GB1/RHD3-type G domain; it reads GFNYHLISVF…IPADGFAVYA (258 aa). 59-66 lines the GTP pocket; it reads GSQSTGKS. Positions 481-507 form a coiled coil; it reads SNYTQELALYQKDLEKISAQLRKDEMR. The helical transmembrane segment at 748–768 threads the bilayer; that stretch reads IPVYFYILLLALGWNEIVAVL. The Lumenal segment spans residues 769–771; it reads RNP. A helical transmembrane segment spans residues 772–792; sequence LYFFMLFLCAVGAFVTYQLNL. Residues 793–862 are Cytoplasmic-facing; that stretch reads WGPMIKMAEA…DDDDEDEGSW (70 aa). The tract at residues 819–862 is disordered; that stretch reads LEPSEAGPHAARYKNSTEEYEMSNVKAPQRTNSGDDDDEDEGSW. A compositionally biased stretch (acidic residues) spans 852 to 862; it reads GDDDDEDEGSW.

The protein belongs to the TRAFAC class dynamin-like GTPase superfamily. GB1/RHD3 GTPase family. RHD3 subfamily.

The protein localises to the endoplasmic reticulum membrane. Functionally, cooperates with the reticulon proteins and tubule-shaping DP1 family proteins to generate and maintain the structure of the tubular endoplasmic reticulum network. Has GTPase activity, which is required for its function in ER organization. The polypeptide is Protein SEY1 (Uncinocarpus reesii (strain UAMH 1704)).